The following is a 289-amino-acid chain: CRISPR-associated endoribonuclease Cas6 2 (289 aa).

It belongs to the CRISPR-associated endoribonuclease Cas6 family. As to quaternary structure, possibly part of the aCascade ribonucleoprotein complex. Mg(2+) is required as a cofactor.

CRISPR (clustered regularly interspaced short palindromic repeat) is an adaptive immune system that provides protection against mobile genetic elements (viruses, transposable elements and conjugative plasmids). CRISPR clusters contain sequences complementary to antecedent mobile elements and target invading nucleic acids. CRISPR clusters are transcribed and processed into CRISPR RNA (crRNA). Functions as a ssRNA-specific endoribonuclease, generating an 8 base-long tag known as the 5' handle. This is CRISPR-associated endoribonuclease Cas6 2 (cas6b) from Saccharolobus solfataricus (strain ATCC 35092 / DSM 1617 / JCM 11322 / P2) (Sulfolobus solfataricus).